We begin with the raw amino-acid sequence, 220 residues long: NAD(P)H-quinone oxidoreductase subunit M, chloroplastic (220 aa).

The transit peptide at 1-37 directs the protein to the chloroplast; the sequence is MATTASPFLSPAKLSLERRLPRATWTARRSVRFPPVR. Residues 20-91 form a disordered region; sequence LPRATWTARR…PVQPLAESKN (72 aa). Residues 34–44 show a composition bias toward low complexity; sequence PPVRAQDQQQQ.

It belongs to the NDH complex subunit M family. Part of the chloroplast NDH complex, composed of a mixture of chloroplast and nucleus encoded subunits. Component of the NDH subcomplex A, at least composed of ndhH, ndhI, ndhJ, ndhK, ndhL, ndhM, ndhN and ndhO.

It is found in the plastid. The protein localises to the chloroplast thylakoid membrane. It catalyses the reaction a plastoquinone + NADH + (n+1) H(+)(in) = a plastoquinol + NAD(+) + n H(+)(out). The catalysed reaction is a plastoquinone + NADPH + (n+1) H(+)(in) = a plastoquinol + NADP(+) + n H(+)(out). Its function is as follows. NDH shuttles electrons from NAD(P)H:plastoquinone, via FMN and iron-sulfur (Fe-S) centers, to quinones in the photosynthetic chain and possibly in a chloroplast respiratory chain. The immediate electron acceptor for the enzyme in this species is believed to be plastoquinone. Couples the redox reaction to proton translocation, and thus conserves the redox energy in a proton gradient. This Oryza sativa subsp. indica (Rice) protein is NAD(P)H-quinone oxidoreductase subunit M, chloroplastic.